Consider the following 241-residue polypeptide: Uridylate kinase (241 aa).

12–15 provides a ligand contact to ATP; it reads KLSG. The involved in allosteric activation by GTP stretch occupies residues 20 to 25; that stretch reads GDKGVG. Gly54 is a UMP binding site. The ATP site is built by Gly55 and Arg59. Residues Asp74 and 135–142 contribute to the UMP site; that span reads IGSPYFST. The ATP site is built by Asn163, Tyr169, and Asp172.

This sequence belongs to the UMP kinase family. In terms of assembly, homohexamer.

It localises to the cytoplasm. The catalysed reaction is UMP + ATP = UDP + ADP. Its pathway is pyrimidine metabolism; CTP biosynthesis via de novo pathway; UDP from UMP (UMPK route): step 1/1. With respect to regulation, allosterically activated by GTP. Inhibited by UTP. In terms of biological role, catalyzes the reversible phosphorylation of UMP to UDP. The chain is Uridylate kinase from Streptococcus gordonii (strain Challis / ATCC 35105 / BCRC 15272 / CH1 / DL1 / V288).